The sequence spans 1838 residues: MELKSLGTEHKAAVHTAAHNPVGHGVALQQGSSSSSPQNAAASLAAEGKNRGKMPRIHQPSTAADGISAAHQQKKSFSLRGCLGTKKFSRSAPQGQPGTTHSKGATLRDLLARDDGETQHEAAAPDAARLTRSGGVKRRNMDDMAGRPMVKGGSGEDKVPTQQKRHQLNNFGQMRQTMLSKMAHPASANAGDRLQHSPPHIPGSHHEIKEEPVGSTSKATTAHADRVEIAQEDDDSEFQQLHQQRLARERENPPQPPKLGVATPISARFQPKLTAVAESVLEGTDTTQSPLKPQSMLKGSGAGVTPLAVTLDKGKLQLAPDNPPALNTLLKQTLGKDTQHYLAHHASSDGSQHLLLDNKGHLFDIKSTATSYSVLHNSHPGEIKGKLAQAGTGSVSVDGKSGKISLGSGTQSHNKTMLSQPGEAHRSLLTGIWQHPAGAARPQGESIRLHDDKIHILHPELGVWQSADKDTHSQLSRQADGKLYALKDNRTLQNLSDNKSSEKLVDKIKSYSVDQRGQVAILTDTPGRHKMSIMPSLDASPESHISLSLHFADAHQGLLHGKSELEAQSVAISHGRLVVADSEGKLFSAAIPKQGDGNELKMKAMPQHALDEHFGHDHQISGFFHDDHGQLNALVKNNFRQQHACPLGNDHQFHPGWNLTDALVIDNQLGLHHTNPEPHEILDMGHLGSLALQEGKLHYFDQLTKGWTGAESDCKQLKKGLDGAAYLLKDGEVKRLNINQSTSSIKHGTENVFSLPHVRNKPEPGDALQGLNKDDKAQAMAVIGVNKYLALTEKGDIRSFQIKPGTQQLERPAQTLSREGISGELKDIHVDHKQNLYALTHEGEVFHQPREAWQNGAESSSWHKLALPQSESKLKSLDMSHEHKPIATFEDGSQHQLKAGGWHAYAAPERGPLAVGTSGSQTVFNRLMQGVKGKVIPGSGLTVKLSAQTGGMTGAEGRKVSSKFSERIRAYAFNPTMSTPRPIKNAAYATQHGWQGREGLKPLYEMQGALIKQLDAHNVRHNAPQPDLQSKLETLDLGEHGAELLNDMKRFRDELEQSATRSVTVLGQHQGVLKSNGEINSEFKPSPGKALVQSFNVNRSGQDLSKSLQQAVHATPPSAESKLQSMLGHFVSAGVDMSHQKGEIPLGRQRDPNDKTALTKSRLILDTVTIGELHELADKAKLVSDHKPDADQIKQLRQQFDTLREKRYESNPVKHYTDMGFTHNKALEANYDAVKAFINAFKKEHHGVNLTTRTVLESQGSAELAKKLKNTLLSLDSGESMSFSRSYGGGVSTVFVPTLSKKVPVPVIPGAGITLDRAYNLSFSRTSGGLNVSFGRDGGVSGNIMVATGHDVMPYMTGKKTSAGNASDWLSAKHKISPDLRIGAAVSGTLQGTLQNSLKFKLTEDELPGFIHGLTHGTLTPAELLQKGIEHQMKQGSKLTFSVDTSANLDLRAGINLNEDGSKPNGVTARVSAGLSASANLAAGSRERSTTSGQFGSTTSASNNRPTFLNGVGAGANLTAALGVAHSSTHEGKPVGIFPAFTSTNVSAALALDNRTSQSISLELKRAEPVTSNDISELTSTLGKHFKDSATTKMLAALKELDDAKPAEQLHILQQHFSAKDVVGDERYEAVRNLKKLVIRQQAADSHSMELGSASHSTTYNNLSRINNDGIVELLHKHFDAALPASSAKRLGEMMNNDPALKDIIKQLQSTPFSSASVSMELKDGLREQTEKAILDGKVGREEVGVLFQDRNNLRVKSVSVSQSVSKSEGFNTPALLLGTSNSAAMSMERNIGTINFKYGQDQNTPRRFTLEGGIAQANPQVASALTDLKKEGLEMKS.

Residues 1 to 12 (MELKSLGTEHKA) show a composition bias toward basic and acidic residues. Disordered regions lie at residues 1–72 (MELK…AAHQ), 86–163 (KKFS…PTQQ), 182–264 (MAHP…VATP), 281–300 (LEGTDTTQSPLKPQSMLKGS), 398–418 (DGKSGKISLGSGTQSHNKTML), and 1480–1505 (NLAAGSRERSTTSGQFGSTTSASNNR). A compositionally biased stretch (low complexity) spans 27–46 (ALQQGSSSSSPQNAAASLAA). Polar residues predominate over residues 91–103 (SAPQGQPGTTHSK). Positions 110 to 120 (LLARDDGETQH) are enriched in basic and acidic residues. Positions 407 to 418 (GSGTQSHNKTML) are enriched in polar residues. The span at 1480–1502 (NLAAGSRERSTTSGQFGSTTSAS) shows a compositional bias: low complexity.

The protein belongs to the AvrE family. Interacts with the chaperone DspF (DspB/F).

The protein resides in the secreted. Its subcellular location is the host cell. Its activity is regulated as follows. Polyamidoamine dendrimers inhibit channel and virulence activities. In terms of biological role, major virulence factor that may function as a water- and solute-permeable channel dedicated to creating osmotic/water potential perturbation and a water- and nutrient-rich apoplast in which bacteria multiply within the infected plant tissues. Expression in Xenopus oocytes results in inward and outward currents, permeability to water and osmolarity-dependent oocyte swelling and bursting. Acts as a major cell-death inducer during fire blight, a necrotic disease affecting plants of the rosaceous family, and during hypersensitive response (HR) on non-host plants. Essential for pathogenicity on host plants. Contributes quantitatively and in a strain-dependent fashion to HR elicitation in non-host plants such as tobacco. Induces cell death in leaves of apple, a host plant, and tobacco, a non-host plant. Also triggers necrosis in the widely used model, non-host, N.benthamiana and in yeast. Required for the transient multiplication and survival of E.amylovora in non-host A.thaliana leaves. In A.thaliana, triggers electrolyte leakage, activation of defense pathways, reactive oxygen species (ROS) accumulation and cell death. The toxicity of DspE in A.thaliana is associated with an early repression of de novo protein synthesis. The protein is Type III effector DspE of Erwinia amylovora (Fire blight bacteria).